The sequence spans 185 residues: Putative manganese efflux pump MntP (185 aa).

Transmembrane regions (helical) follow at residues 3–23 (IFTL…VSLA), 40–60 (LLFV…VSVI), 64–84 (FDAY…LRMI), 102–122 (TFSR…AVGI), 124–144 (LSLA…FVLI), and 165–185 (EIFG…DAMM).

Belongs to the MntP (TC 9.B.29) family.

It is found in the cell inner membrane. In terms of biological role, probably functions as a manganese efflux pump. This is Putative manganese efflux pump MntP from Elusimicrobium minutum (strain Pei191).